A 767-amino-acid polypeptide reads, in one-letter code: Golgin subfamily A member 1 (767 aa).

Residues 13 to 58 (TAVAQRPGGATRIPRSVSKESVASMGADSGDDFASDGSSSREDLSS) form a disordered region. A phosphoserine mark is found at serine 30, serine 36, serine 41, serine 47, serine 50, and serine 51. The stretch at 50 to 657 (SSSREDLSSQ…RKTLQKELKI (608 aa)) forms a coiled coil. The GRIP domain maps to 688 to 737 (TDAREINFEYLKHVVLKFMSCRESEAFHLIKAVSVLLNFSQEEENMLKET). Residues 748-767 (KPAPKGSIRPSISNPRIPWS) form a disordered region.

In terms of assembly, interacts with RAB6A. Directly interacts with TBC1D23. Interacts with FAM91A1; this interaction may be mediated by TBC1D23. Interacts with ARL1; this interaction recruits Golgin-97/GOLGA1 onto the Golgi apparatus. MARylated by PARP12; MARylation is required for basolateral export of E-Cadherin.

Its subcellular location is the golgi apparatus membrane. The protein resides in the golgi apparatus. It localises to the trans-Golgi network membrane. It is found in the cytoplasmic vesicle. The protein localises to the secretory vesicle. Its subcellular location is the acrosome. Its function is as follows. Involved in vesicular trafficking at the Golgi apparatus level. Involved in endosome-to-Golgi trafficking. Mechanistically, captures transport vesicles arriving from endosomes via the protein TBC1D23. Recognized vesicles are then tethered to the trans-Golgi before subsequent SNARE engagement and vesicle fusion. Selectively regulates E-cadherin transport from the trans-Golgi network in tubulovesicular carriers. In terms of biological role, (Microbial infection) Plays an important role in poxvirus morphogenesis. Translocates into the viral factories where it may transport the membrane fragments and associated protein factors important for virus maturation to the sites of virion assembly. This is Golgin subfamily A member 1 (GOLGA1) from Homo sapiens (Human).